A 417-amino-acid chain; its full sequence is MSQRKRYSLNVVTSPSIPSPTPSAPIRTNESNWEAASPASAASSFLPNVHHGGTVLNPGLGIMRSPSLNKSGAFGRSGSSGSSTVIEPSNIKLLLIGDANVGKTAMILSYCRELLTRAEMSRSVRLRHQQQQQHKDLGLKKTVVNHRLSMKEKRKRYSSNDFEKEFKDINHFADETSDFGNPNIGDDNNHEMADPNEIVIETRSTIGIDIKTNLVNIDNRFFNVILWDTAGQERYQNAIIPSLYKKTNAVILTYDITNAKSFQSCMERWIVQALENFSSQDLLKARFFLVGNKIDLYKERQVTHYDVVQMVQEMQLKHGIKISGNFEVSCKWVNVVERTMNMIILDLVENGCFENNDPCVSITTSDDVQGHEQEFHDTVEEPFNFTRQRQHQLEKNNTVDITKPNDDIANNQSICCV.

Residues 1–34 (MSQRKRYSLNVVTSPSIPSPTPSAPIRTNESNWE) form a disordered region. Residues 97 to 104 (GDANVGKT), 228 to 232 (DTAGQ), and 292 to 295 (NKID) each bind GTP. 2 S-geranylgeranyl cysteine lipidation sites follow: cysteine 415 and cysteine 416.

The protein belongs to the small GTPase superfamily. Rab family. Interacts with MYO2 (via C-terminal tail domain). Interacts with YIF1, YIP3, YIP4 and YIP5.

The protein localises to the endoplasmic reticulum membrane. It is found in the bud tip. The protein resides in the bud neck. Involved in the positive control of both endoplasmic reticulum (ER) and mitochondrion inheritance during cell divison. Required for the MYO2-dependent retention of newly inherited mitochondria at the bud tip in developing daughter cells. This chain is GTP-binding protein YPT11 (YPT11), found in Saccharomyces cerevisiae (strain YJM789) (Baker's yeast).